A 698-amino-acid chain; its full sequence is MTDAKYVLCRWEKRLWPAKVLARTETSAKNKRKKEFFLDVQILSLKEKIQVKSSAVEALQKSHIENIAAFLASQNEVPATPLEELTYRRSLRVALDVLNERTSLSPESHPVENGSTPSQKGKPDADMASQVSSAPSPSFLSEDDQAVAAQCASKRRWECSPKSLSPLSASEEDLRCKVDPKTGLSESGALGTEVPAPTGDESQNGSGSQLDHGQESTTKKRQRNSGEKPARRGKAESGLSKGDSVAESGGQASSCVALASPRLPSQTWEGDPCAGVEGCDPVESSGNIRPLLDSERSKGRLTKRPRLDGGRNPLPRHLGTRTVGAVPSRRSCSGEVTTLRRAGDSDRPEEADPMSSEESTGFKSVHSLLEEEEEEEEEEEEEEEPPRILLYHEPRSFEVGMLVWLKYQKYPFWPAVVKSVRRRDKKASVLFIEGNMNPKGRGITVSLRRLKHFDCKEKHALLDRAKEDFAQAIGWCVSLITDYRVRLGCGSFAGSFLEYYAADISYPVRKSIQQDVLGTRFPQLGKGDPEEPMGDSRLGQWRPCRKVLPDRSRAARDKANQKLVEYIVKAKGAESHLRAILHSRKPSRWLKTFLSSNQYVTCMETYLEDEAQLDEVVEYLQGVCRDMDGEMPARGSGDRIRFILDVLLPEAIICAISAVEAVDYKTAEQKYLRGPTLSYREKEIFDNELLEERNRRRR.

Disordered stretches follow at residues 102 to 145 and 159 to 386; these read TSLS…EDDQ and CSPK…EEPP. The residue at position 105 (Ser-105) is a Phosphoserine. Over residues 129–139 the composition is skewed to polar residues; sequence SQVSSAPSPSF. Phosphoserine is present on residues Ser-165, Ser-168, and Ser-170. The span at 200 to 211 shows a compositional bias: polar residues; that stretch reads DESQNGSGSQLD. Composition is skewed to basic and acidic residues over residues 212–235 and 341–350; these read HGQE…RGKA and RAGDSDRPEE. Ser-355 and Ser-356 each carry phosphoserine. The segment covering 370 to 384 has biased composition (acidic residues); sequence EEEEEEEEEEEEEEE. The 62-residue stretch at 399 to 460 folds into the PWWP domain; sequence VGMLVWLKYQ…KHFDCKEKHA (62 aa).

It belongs to the PWWP3A family. Interacts with TP53BP1 (via BRCT domain); the interaction is not dependent on its phosphorylation status. Binds nucleosomes. Interacts with trimethylated 'Lys-36' of histone H3 (H3K36me3) (in vitro).

Its subcellular location is the nucleus. Involved in the DNA damage response pathway by contributing to the maintenance of chromatin architecture. Recruited to the vicinity of DNA breaks by TP53BP1 and plays an accessory role to facilitate damage-induced chromatin changes and promoting chromatin relaxation. Required for efficient DNA repair and cell survival following DNA damage. In Rattus norvegicus (Rat), this protein is PWWP domain-containing DNA repair factor 3A.